A 141-amino-acid chain; its full sequence is uncharacterized protein (141 aa).

This is an uncharacterized protein from Schizosaccharomyces pombe (strain 972 / ATCC 24843) (Fission yeast).